A 362-amino-acid chain; its full sequence is Phosphoserine aminotransferase (362 aa).

2 residues coordinate L-glutamate: S9 and R42. Residues 76–77 (GR), W102, T153, D174, and Q197 contribute to the pyridoxal 5'-phosphate site. The residue at position 198 (K198) is an N6-(pyridoxal phosphate)lysine. 239 to 240 (NT) is a pyridoxal 5'-phosphate binding site.

It belongs to the class-V pyridoxal-phosphate-dependent aminotransferase family. SerC subfamily. As to quaternary structure, homodimer. It depends on pyridoxal 5'-phosphate as a cofactor.

It localises to the cytoplasm. The catalysed reaction is O-phospho-L-serine + 2-oxoglutarate = 3-phosphooxypyruvate + L-glutamate. It catalyses the reaction 4-(phosphooxy)-L-threonine + 2-oxoglutarate = (R)-3-hydroxy-2-oxo-4-phosphooxybutanoate + L-glutamate. It participates in amino-acid biosynthesis; L-serine biosynthesis; L-serine from 3-phospho-D-glycerate: step 2/3. The protein operates within cofactor biosynthesis; pyridoxine 5'-phosphate biosynthesis; pyridoxine 5'-phosphate from D-erythrose 4-phosphate: step 3/5. In terms of biological role, catalyzes the reversible conversion of 3-phosphohydroxypyruvate to phosphoserine and of 3-hydroxy-2-oxo-4-phosphonooxybutanoate to phosphohydroxythreonine. The polypeptide is Phosphoserine aminotransferase (Escherichia coli O17:K52:H18 (strain UMN026 / ExPEC)).